Here is a 156-residue protein sequence, read N- to C-terminus: Small ribosomal subunit protein uS7 (156 aa).

It belongs to the universal ribosomal protein uS7 family. Part of the 30S ribosomal subunit. Contacts proteins S9 and S11.

In terms of biological role, one of the primary rRNA binding proteins, it binds directly to 16S rRNA where it nucleates assembly of the head domain of the 30S subunit. Is located at the subunit interface close to the decoding center, probably blocks exit of the E-site tRNA. The chain is Small ribosomal subunit protein uS7 from Hahella chejuensis (strain KCTC 2396).